Consider the following 884-residue polypeptide: Protein translocase subunit SecA (884 aa).

ATP-binding positions include Gln-83, Gly-101–Thr-105, and Asp-491.

Belongs to the SecA family.

It is found in the plastid. The protein resides in the chloroplast stroma. The protein localises to the chloroplast thylakoid membrane. The catalysed reaction is ATP + H2O + cellular proteinSide 1 = ADP + phosphate + cellular proteinSide 2.. In terms of biological role, has a central role in coupling the hydrolysis of ATP to the transfer of proteins across the thylakoid membrane. The chain is Protein translocase subunit SecA from Porphyra purpurea (Red seaweed).